The chain runs to 681 residues: DNA ligase (681 aa).

Residues 45-49 (DFDFD), 94-95 (SL), and glutamate 120 contribute to the NAD(+) site. Lysine 122 (N6-AMP-lysine intermediate) is an active-site residue. Positions 143, 177, 289, and 313 each coordinate NAD(+). Residues cysteine 403, cysteine 406, cysteine 421, and cysteine 426 each contribute to the Zn(2+) site. In terms of domain architecture, BRCT spans 593–681 (ADQQPFAGQS…SLKIDFKNLI (89 aa)).

The protein belongs to the NAD-dependent DNA ligase family. LigA subfamily. It depends on Mg(2+) as a cofactor. Requires Mn(2+) as cofactor.

The catalysed reaction is NAD(+) + (deoxyribonucleotide)n-3'-hydroxyl + 5'-phospho-(deoxyribonucleotide)m = (deoxyribonucleotide)n+m + AMP + beta-nicotinamide D-nucleotide.. Functionally, DNA ligase that catalyzes the formation of phosphodiester linkages between 5'-phosphoryl and 3'-hydroxyl groups in double-stranded DNA using NAD as a coenzyme and as the energy source for the reaction. It is essential for DNA replication and repair of damaged DNA. This is DNA ligase from Leptospira interrogans serogroup Icterohaemorrhagiae serovar copenhageni (strain Fiocruz L1-130).